We begin with the raw amino-acid sequence, 716 residues long: MGETKIIYHLDGQETPYLVKLPLPAERVTLADFKGVLQRPSYKFFFKSMDDDFGVVKEEISDDNAKLPCFNGRVVSWLVSAEGSHPEPAPFCADNPSELPPSMERTGGIGDSRPPSFHPHASGGSQENLDNDTETDSLVSAQRERPRRRDGPEHAARLNGTTKGERRREPGGYDSSSTLMSSELETTSFFDSDEDDSTSRFSSSTEQSSASRLMRRHKRRRRKQKVSRIERSSSFSSITDSTMSLNIITVTLNMEKYNFLGISIVGQSNERGDGGIYIGSIMKGGAVAADGRIEPGDMLLQVNEINFENMSNDDAVRVLREIVHKPGPITLTVAKCWDPSPRGCFTLPRSEPIRPIDPAAWVSHTAAMTGTFPAYGMSPSLSTITSTSSSITSSIPDTERLDDFHLSIHSDMAAIVKAMASPESGLEVRDRMWLKITIPNAFIGSDVVDWLYHNVEGFTDRREARKYASNLLKAGFIRHTVNKITFSEQCYYIFGDLCGNMANLSLHDHDGSSGASDQDTLAPLPHPGAAPWPMAFPYQYPPPPHPYNPHPGFPELGYSYGGGSASSQHSEGSRSSGSNRSGSDRRKEKDPKAGDSKSGGSGSESDHTTRSSLRGPRERAPSERSGPAASEHSHRSHHSLTSSLRSHHTHPSYGPPGVPPLYGPPMLMMTPPPAAMGPPGAPPGRDLASVPPELTASRQSFRMAMGNPSEFFVDVM.

One can recognise a DIX domain in the interval 1 to 82; the sequence is MGETKIIYHL…RVVSWLVSAE (82 aa). Position 27 is an omega-N-methylarginine (R27). Phosphoserine occurs at positions 48 and 125. The disordered stretch occupies residues 85-235; sequence HPEPAPFCAD…VSRIERSSSF (151 aa). A compositionally biased stretch (basic and acidic residues) spans 142 to 156; it reads QRERPRRRDGPEHAA. Over residues 175 to 190 the composition is skewed to low complexity; sequence SSSTLMSSELETTSFF. S192 is modified (phosphoserine). The span at 199-212 shows a compositional bias: low complexity; it reads SRFSSSTEQSSASR. Omega-N-methylarginine is present on R212. A compositionally biased stretch (basic residues) spans 213–226; that stretch reads LMRRHKRRRRKQKV. One can recognise a PDZ domain in the interval 249–321; that stretch reads TVTLNMEKYN…NDDAVRVLRE (73 aa). R271 is modified (asymmetric dimethylarginine; by PRMT1; alternate). Symmetric dimethylarginine; by PRMT7; alternate occurs at positions 271 and 342. R342 carries the post-translational modification Omega-N-methylarginine; alternate. Phosphothreonine is present on T346. The 75-residue stretch at 422–496 folds into the DEP domain; sequence PESGLEVRDR…SEQCYYIFGD (75 aa). Residues 546-691 form a disordered region; it reads PYNPHPGFPE…PPGRDLASVP (146 aa). Low complexity predominate over residues 565–581; the sequence is ASSQHSEGSRSSGSNRS. Basic and acidic residues-rich tracts occupy residues 582-595 and 604-622; these read GSDRRKEKDPKAGD and ESDHTTRSSLRGPRERAPS. Position 614 is a symmetric dimethylarginine; by PRMT7 (R614). Pro residues-rich tracts occupy residues 653–663 and 670–682; these read YGPPGVPPLYG and TPPPAAMGPPGAP. Residue S697 is modified to Phosphoserine. R698 is subject to Omega-N-methylarginine; alternate. R698 bears the Dimethylated arginine; alternate mark. Residue S700 is modified to Phosphoserine.

Belongs to the DSH family. Interacts (via the PDZ domain) with the C-terminal regions of VANGL1 and VANGL2. Interacts (via the region containing both the PDZ and DEP domains) with LRRFIP2; the DIX domain may inhibit this interaction. Interacts with CYLD. Interacts with CEP164 and DAB2. Interacts with DCDC2. Interacts with FOXK1 and FOXK2. Interacts with DAAM2. Ubiquitinated. Deubiquitinated by CYLD, which acts on 'Lys-63'-linked ubiquitin chains. Post-translationally, phosphorylated by CSNK1D. In terms of processing, arginine methylation may function as a switch in regulation of function in Wnt signaling. As to expression, ubiquitous.

The protein resides in the cytoplasm. Involved in the signal transduction pathway mediated by multiple Wnt genes. This chain is Segment polarity protein dishevelled homolog DVL-3 (Dvl3), found in Mus musculus (Mouse).